Consider the following 132-residue polypeptide: NADPH-dependent 7-cyano-7-deazaguanine reductase (132 aa).

Residue C34 is the Thioimide intermediate of the active site. Residue D41 is the Proton donor of the active site. Substrate contacts are provided by residues 56–58 and 75–76; these read IEL and HE.

The protein belongs to the GTP cyclohydrolase I family. QueF type 1 subfamily.

The protein localises to the cytoplasm. The enzyme catalyses 7-aminomethyl-7-carbaguanine + 2 NADP(+) = 7-cyano-7-deazaguanine + 2 NADPH + 3 H(+). It participates in tRNA modification; tRNA-queuosine biosynthesis. Catalyzes the NADPH-dependent reduction of 7-cyano-7-deazaguanine (preQ0) to 7-aminomethyl-7-deazaguanine (preQ1). The polypeptide is NADPH-dependent 7-cyano-7-deazaguanine reductase (Vesicomyosocius okutanii subsp. Calyptogena okutanii (strain HA)).